The following is a 438-amino-acid chain: ATP-dependent RNA helicase RhlB (438 aa).

The short motif at 9–37 is the Q motif element; sequence QRFADLPLHPEVKQALAENGFEFCTPIQA. Positions 40-219 constitute a Helicase ATP-binding domain; sequence LPVLLQSKDI…YDHMNEPVKV (180 aa). 53 to 60 contributes to the ATP binding site; sequence AQTGTGKT. The short motif at 165 to 168 is the DEAD box element; it reads DEAD. The 148-residue stretch at 243–390 folds into the Helicase C-terminal domain; it reads KMRLLLTLIE…VSNYDSEALL (148 aa). The tract at residues 395 to 438 is disordered; the sequence is TPAKIHRKHPSGTRNLRDRSGTSRPGAQRSGARPPRHDRTRRHS. Residues 428-438 are compositionally biased toward basic residues; sequence PPRHDRTRRHS.

Belongs to the DEAD box helicase family. RhlB subfamily. In terms of assembly, component of the RNA degradosome, which is a multiprotein complex involved in RNA processing and mRNA degradation.

It is found in the cytoplasm. It carries out the reaction ATP + H2O = ADP + phosphate + H(+). Functionally, DEAD-box RNA helicase involved in RNA degradation. Has RNA-dependent ATPase activity and unwinds double-stranded RNA. This chain is ATP-dependent RNA helicase RhlB, found in Shewanella baltica (strain OS223).